A 343-amino-acid polypeptide reads, in one-letter code: Heat-inducible transcription repressor HrcA (343 aa).

Belongs to the HrcA family.

In terms of biological role, negative regulator of class I heat shock genes (grpE-dnaK-dnaJ and groELS operons). Prevents heat-shock induction of these operons. The sequence is that of Heat-inducible transcription repressor HrcA from Bacillus subtilis (strain 168).